The sequence spans 100 residues: Competence protein ComGE (100 aa).

A helical transmembrane segment spans residues 15–35; the sequence is VILLEAVVALAIFASIATLLL.

As to quaternary structure, the transformation pili are flexible filaments, consisting mainly of the major pilin ComGC and smaller amounts of the minor pilins, including at least ComGD, ComGF and ComGG, and perhaps ComGE. Interacts with ComGD. Interacts with ComGF. Interacts with ComGG.

Its subcellular location is the cell membrane. It is found in the cell surface. Functionally, required for formation of the type IV-like pilus (T4P) that plays a role in transformation. Transformation pili are dynamically extended and retracted, perhaps thereby promoting DNA uptake and transformation. Involved in transformation. Required for DNA binding. This chain is Competence protein ComGE, found in Streptococcus pneumoniae (strain ATCC BAA-255 / R6).